The sequence spans 163 residues: Large ribosomal subunit protein bL21 (163 aa).

The segment at Lys-124–Asp-163 is disordered.

The protein belongs to the bacterial ribosomal protein bL21 family. As to quaternary structure, part of the 50S ribosomal subunit. Contacts protein L20.

This protein binds to 23S rRNA in the presence of protein L20. This Bartonella quintana (strain Toulouse) (Rochalimaea quintana) protein is Large ribosomal subunit protein bL21.